A 509-amino-acid chain; its full sequence is Proto-oncogene tyrosine-protein kinase LCK (509 aa).

Gly2 carries the N-myristoyl glycine lipid modification. The tract at residues 2–72 is interactions with CD4 and CD8; the sequence is GCGCSSHLED…DNLVIALHSY (71 aa). 2 S-palmitoyl cysteine lipidation sites follow: Cys3 and Cys5. In terms of domain architecture, SH3 spans 61 to 121; sequence LQDNLVIALH…PFNFVAKANS (61 aa). Residue Lys99 forms a Glycyl lysine isopeptide (Lys-Gly) (interchain with G-Cter in ubiquitin) linkage. Ser102 is subject to Phosphoserine. An SH2 domain is found at 127-224; sequence WFFKNLSRKD…GLCTRLSRPC (98 aa). The segment at 154 to 242 is interaction with PTPRH; that stretch reads RESESTAGSF…WWEDEWEVPR (89 aa). Thr159 bears the Phosphothreonine mark. The residue at position 162 (Ser162) is a Phosphoserine. The residue at position 192 (Tyr192) is a Phosphotyrosine. Residue Ser194 is modified to Phosphoserine. One can recognise a Protein kinase domain in the interval 245 to 498; the sequence is LKLVERLGAG…YLRSVLEDFF (254 aa). ATP-binding positions include 251-259 and Lys273; that span reads LGAGQFGEV. Lys276 is covalently cross-linked (Glycyl lysine isopeptide (Lys-Gly) (interchain with G-Cter in ubiquitin)). Asp364 (proton acceptor) is an active-site residue. Tyr394 is subject to Phosphotyrosine; by autocatalysis. At Tyr505 the chain carries Phosphotyrosine; by CSK.

This sequence belongs to the protein kinase superfamily. Tyr protein kinase family. As to quaternary structure, binds to the cytoplasmic domain of cell surface receptors, such as AXL, CD2, CD4, CD5, CD8, CD44, CD45 and CD122. Also binds to effector molecules, such as PI4K, VAV1, RASA1, FYB1 and to other protein kinases including CDK1, RAF1, ZAP70 and SYK. Binds to phosphatidylinositol 3'-kinase (PI3K) from T-lymphocytes through its SH3 domain and to the tyrosine phosphorylated form of KHDRBS1/p70 through its SH2 domain. Interacts with SQSTM1. Interacts with phosphorylated LIME1. Interacts with CBLB and PTPRH. Interacts with RUNX3. Forms a signaling complex with EPHA1, PTK2B and PI3-KINASE; upon activation by EFNA1 which may regulate T-lymphocytes migration. Associates with ZAP70 and RHOH; these interactions allow LCK-mediated RHOH and CD3 subunit phosphorylations in the presence of functional ZAP70. Interacts with Saimiriine herpesvirus 2 TIP. Interacts with UNC119; this interaction plays a crucial role in activation of LCK. Interacts with CEACAM1 (via cytoplasmic domain); mediates CEACAM1 phosphorylation resulting in PTPN6 recruitment that dephosphorylates TCR stimulation-induced CD247 and ZAP70. Interacts with CD160. Interacts with CD48. In terms of processing, autophosphorylated on Tyr-394, increasing enzymatic activity, this site is dephosphorylated by PTN22. Phosphorylated on Tyr-505 by CSK, decreasing activity. Dephosphorylated by PTPRC/CD45. Dephosphorylation at Tyr-394 by PTPN2 negatively regulates T-cells differentiation. Dephosphorylation at Tyr-394 by DUSP22 negatively regulates T-cell receptor signaling. Post-translationally, myristoylation is required prior to palmitoylation. Palmitoylation regulates association with the plasma membrane and could be mediated by ZDHHC2. In terms of processing, 'Lys-63'-linked ubiquitinated at Lys-99 and Lys-276 by UBR2; this modification is required for autophosphorylation at Tyr-394. As to expression, expressed specifically in lymphoid cells.

It localises to the cell membrane. The protein resides in the cytoplasm. Its subcellular location is the cytosol. It carries out the reaction L-tyrosyl-[protein] + ATP = O-phospho-L-tyrosyl-[protein] + ADP + H(+). Its activity is regulated as follows. The relative activities of the inhibitory tyrosine-protein kinase CSK and the activating tyrosine-protein phosphatase PTPRC/CD45 determine the level of LCK activity. These interactions allow rapid and efficient activation of LCK in response to TCR stimulation. Non-receptor tyrosine-protein kinase that plays an essential role in the selection and maturation of developing T-cells in the thymus and in the function of mature T-cells. Plays a key role in T-cell antigen receptor (TCR)-linked signal transduction pathways. Constitutively associated with the cytoplasmic portions of the CD4 and CD8 surface receptors. Association of the TCR with a peptide antigen-bound MHC complex facilitates the interaction of CD4 and CD8 with MHC class II and class I molecules, respectively, thereby recruiting the associated LCK protein to the vicinity of the TCR/CD3 complex. LCK then phosphorylates tyrosine residues within the immunoreceptor tyrosine-based activation motifs (ITAM) of the cytoplasmic tails of the TCR-gamma chains and CD3 subunits, initiating the TCR/CD3 signaling pathway. Once stimulated, the TCR recruits the tyrosine kinase ZAP70, that becomes phosphorylated and activated by LCK. Following this, a large number of signaling molecules are recruited, ultimately leading to lymphokine production. LCK also contributes to signaling by other receptor molecules. Associates directly with the cytoplasmic tail of CD2, which leads to hyperphosphorylation and activation of LCK. Also plays a role in the IL2 receptor-linked signaling pathway that controls the T-cell proliferative response. Binding of IL2 to its receptor results in increased activity of LCK. Is expressed at all stages of thymocyte development and is required for the regulation of maturation events that are governed by both pre-TCR and mature alpha beta TCR. Phosphorylates other substrates including RUNX3, PTK2B/PYK2, the microtubule-associated protein MAPT, RHOH or TYROBP. The chain is Proto-oncogene tyrosine-protein kinase LCK (LCK) from Saimiri sciureus (Common squirrel monkey).